A 95-amino-acid polypeptide reads, in one-letter code: Small ribosomal subunit protein bS6 (95 aa).

This sequence belongs to the bacterial ribosomal protein bS6 family.

Its function is as follows. Binds together with bS18 to 16S ribosomal RNA. The protein is Small ribosomal subunit protein bS6 of Acholeplasma laidlawii (strain PG-8A).